The sequence spans 143 residues: Interleukin-3 (143 aa).

Positions 1–19 (MSRLPVLLLLHLLVSPGLQ) are cleaved as a signal peptide. An intrachain disulfide couples cysteine 35 to cysteine 103. Asparagine 89 carries an N-linked (GlcNAc...) asparagine glycan.

The protein belongs to the IL-3 family. As to quaternary structure, monomer. As to expression, activated T-cells, mast cells, natural killer cells.

It localises to the secreted. Functionally, granulocyte/macrophage colony-stimulating factors are cytokines that act in hematopoiesis by controlling the production, differentiation, and function of 2 related white cell populations of the blood, the granulocytes and the monocytes-macrophages. In terms of biological role, this CSF induces granulocytes, macrophages, mast cells, stem cells, erythroid cells, eosinophils and megakaryocytes. The protein is Interleukin-3 (IL3) of Macaca mulatta (Rhesus macaque).